The sequence spans 247 residues: Serine protease 1 (247 aa).

An N-terminal signal peptide occupies residues methionine 1–alanine 15. A propeptide spans alanine 16–lysine 23 (activation peptide). The Peptidase S1 domain occupies isoleucine 24–alanine 244. 5 disulfide bridges follow: cysteine 30-cysteine 160, cysteine 48-cysteine 64, cysteine 139-cysteine 206, cysteine 171-cysteine 185, and cysteine 196-cysteine 220. The active-site Charge relay system is histidine 63. Positions 75, 77, 80, and 85 each coordinate Ca(2+). Residue aspartate 107 is the Charge relay system of the active site. Tyrosine 154 is subject to Sulfotyrosine. The Charge relay system role is filled by serine 200.

It belongs to the peptidase S1 family. In terms of assembly, interacts with SERPINA1. Requires Ca(2+) as cofactor. Post-translationally, occurs in a single-chain form and a two-chain form, produced by proteolytic cleavage after Arg-122. In terms of processing, sulfation at Tyr-154 increases selectivity towards basic versus apolar residues at the P2' position of inhibitors that bind in a substrate-like fashion. Although the increase in selectivity is relatively small, it may facilitate digestion of a broader range of dietary proteins.

Its subcellular location is the secreted. The protein localises to the extracellular space. The catalysed reaction is Preferential cleavage: Arg-|-Xaa, Lys-|-Xaa.. In terms of biological role, has activity against the synthetic substrates Boc-Phe-Ser-Arg-Mec, Boc-Leu-Thr-Arg-Mec, Boc-Gln-Ala-Arg-Mec and Boc-Val-Pro-Arg-Mec. The single-chain form is more active than the two-chain form against all of these substrates. The protein is Serine protease 1 of Homo sapiens (Human).